We begin with the raw amino-acid sequence, 155 residues long: Small ribosomal subunit protein uS7c (155 aa).

The protein belongs to the universal ribosomal protein uS7 family. Part of the 30S ribosomal subunit.

Its subcellular location is the plastid. It is found in the chloroplast. In terms of biological role, one of the primary rRNA binding proteins, it binds directly to 16S rRNA where it nucleates assembly of the head domain of the 30S subunit. In Ananas comosus (Pineapple), this protein is Small ribosomal subunit protein uS7c (rps7).